The following is a 504-amino-acid chain: Cytochrome P450 2D1 (504 aa).

C446 is a heme binding site.

It belongs to the cytochrome P450 family. Heme serves as cofactor.

The protein resides in the endoplasmic reticulum membrane. The protein localises to the microsome membrane. The catalysed reaction is an organic molecule + reduced [NADPH--hemoprotein reductase] + O2 = an alcohol + oxidized [NADPH--hemoprotein reductase] + H2O + H(+). Functionally, cytochromes P450 are a group of heme-thiolate monooxygenases. In liver microsomes, this enzyme is involved in an NADPH-dependent electron transport pathway. It oxidizes a variety of structurally unrelated compounds, including steroids, fatty acids, and xenobiotics. The protein is Cytochrome P450 2D1 (Cyp2d1) of Rattus norvegicus (Rat).